A 162-amino-acid chain; its full sequence is Interleukin-15 (162 aa).

A signal peptide spans 1–29; sequence MRILKPYLRSTSIQCYLCLLLNSHFLTEA. A propeptide spanning residues 30–48 is cleaved from the precursor; it reads CIPVFILSCINAGLPKTEA. Intrachain disulfides connect C83-C133 and C90-C136. Residues N104 and N127 are each glycosylated (N-linked (GlcNAc...) asparagine).

It belongs to the IL-15/IL-21 family.

The protein localises to the secreted. Cytokine that plays a major role in the development of inflammatory and protective immune responses to microbial invaders and parasites by modulating immune cells of both the innate and adaptive immune systems. Stimulates the proliferation of natural killer cells, T-cells and B-cells and promotes the secretion of several cytokines. In monocytes, induces the production of IL8 and monocyte chemotactic protein 1/CCL2, two chemokines that attract neutrophils and monocytes respectively to sites of infection. Unlike most cytokines, which are secreted in soluble form, IL15 is expressed in association with its high affinity IL15RA on the surface of IL15-producing cells and delivers signals to target cells that express IL2RB and IL2RG receptor subunits. Binding to its receptor triggers the phosphorylation of JAK1 and JAK3 and the recruitment and subsequent phosphorylation of signal transducer and activator of transcription-3/STAT3 and STAT5. In mast cells, induces the rapid tyrosine phosphorylation of STAT6 and thereby controls mast cell survival and release of cytokines such as IL4. The chain is Interleukin-15 (IL15) from Felis catus (Cat).